The chain runs to 416 residues: Queuine tRNA-ribosyltransferase accessory subunit 2 (416 aa).

Zn(2+) is bound by residues Cys-323, Cys-325, Cys-328, and His-354.

This sequence belongs to the queuine tRNA-ribosyltransferase family. QTRT2 subfamily. In terms of assembly, heterodimer of a catalytic subunit and an accessory subunit. Zn(2+) serves as cofactor.

The protein resides in the cytoplasm. Its function is as follows. Non-catalytic subunit of the queuine tRNA-ribosyltransferase (TGT) that catalyzes the base-exchange of a guanine (G) residue with queuine (Q) at position 34 (anticodon wobble position) in tRNAs with GU(N) anticodons (tRNA-Asp, -Asn, -His and -Tyr), resulting in the hypermodified nucleoside queuosine (7-(((4,5-cis-dihydroxy-2-cyclopenten-1-yl)amino)methyl)-7-deazaguanosine). In Drosophila mojavensis (Fruit fly), this protein is Queuine tRNA-ribosyltransferase accessory subunit 2.